A 251-amino-acid polypeptide reads, in one-letter code: 3-deoxy-manno-octulosonate cytidylyltransferase (251 aa).

This sequence belongs to the KdsB family.

The protein resides in the cytoplasm. The catalysed reaction is 3-deoxy-alpha-D-manno-oct-2-ulosonate + CTP = CMP-3-deoxy-beta-D-manno-octulosonate + diphosphate. The protein operates within nucleotide-sugar biosynthesis; CMP-3-deoxy-D-manno-octulosonate biosynthesis; CMP-3-deoxy-D-manno-octulosonate from 3-deoxy-D-manno-octulosonate and CTP: step 1/1. Its pathway is bacterial outer membrane biogenesis; lipopolysaccharide biosynthesis. In terms of biological role, activates KDO (a required 8-carbon sugar) for incorporation into bacterial lipopolysaccharide in Gram-negative bacteria. The sequence is that of 3-deoxy-manno-octulosonate cytidylyltransferase from Rhizobium johnstonii (strain DSM 114642 / LMG 32736 / 3841) (Rhizobium leguminosarum bv. viciae).